A 213-amino-acid polypeptide reads, in one-letter code: Uridine kinase (213 aa).

Position 15 to 22 (15 to 22 (GASASGKS)) interacts with ATP.

Belongs to the uridine kinase family.

It is found in the cytoplasm. It carries out the reaction uridine + ATP = UMP + ADP + H(+). The catalysed reaction is cytidine + ATP = CMP + ADP + H(+). Its pathway is pyrimidine metabolism; CTP biosynthesis via salvage pathway; CTP from cytidine: step 1/3. It functions in the pathway pyrimidine metabolism; UMP biosynthesis via salvage pathway; UMP from uridine: step 1/1. The protein is Uridine kinase of Enterobacter sp. (strain 638).